Reading from the N-terminus, the 361-residue chain is Queuine tRNA-ribosyltransferase (361 aa).

Asp-92 acts as the Proton acceptor in catalysis. Residues 92 to 96 (DSGGF), Asp-146, Gln-189, and Gly-216 each bind substrate. The tract at residues 247–253 (GVGKPAD) is RNA binding. Residue Asp-266 is the Nucleophile of the active site. The RNA binding; important for wobble base 34 recognition stretch occupies residues 271 to 275 (TRSGR). Cys-304, Cys-306, Cys-309, and His-335 together coordinate Zn(2+).

It belongs to the queuine tRNA-ribosyltransferase family. In terms of assembly, homodimer. Within each dimer, one monomer is responsible for RNA recognition and catalysis, while the other monomer binds to the replacement base PreQ1. The cofactor is Zn(2+).

It catalyses the reaction 7-aminomethyl-7-carbaguanine + guanosine(34) in tRNA = 7-aminomethyl-7-carbaguanosine(34) in tRNA + guanine. The protein operates within tRNA modification; tRNA-queuosine biosynthesis. Catalyzes the base-exchange of a guanine (G) residue with the queuine precursor 7-aminomethyl-7-deazaguanine (PreQ1) at position 34 (anticodon wobble position) in tRNAs with GU(N) anticodons (tRNA-Asp, -Asn, -His and -Tyr). Catalysis occurs through a double-displacement mechanism. The nucleophile active site attacks the C1' of nucleotide 34 to detach the guanine base from the RNA, forming a covalent enzyme-RNA intermediate. The proton acceptor active site deprotonates the incoming PreQ1, allowing a nucleophilic attack on the C1' of the ribose to form the product. After dissociation, two additional enzymatic reactions on the tRNA convert PreQ1 to queuine (Q), resulting in the hypermodified nucleoside queuosine (7-(((4,5-cis-dihydroxy-2-cyclopenten-1-yl)amino)methyl)-7-deazaguanosine). This Rickettsia bellii (strain OSU 85-389) protein is Queuine tRNA-ribosyltransferase.